Here is a 755-residue protein sequence, read N- to C-terminus: Exocyst complex component 3 (755 aa).

Coiled coils occupy residues 34–62 (DQLD…AAIQ) and 618–649 (RAVM…QLRF). At lysine 38 the chain carries N6-acetyllysine.

It belongs to the SEC6 family. As to quaternary structure, the exocyst complex is composed of EXOC1, EXOC2, EXOC3, EXOC4, EXOC5, EXOC6, EXOC7 and EXOC8. Interacts with EXOC3L1. Interacts with BIRC6/bruce. Interacts with MYRIP. Interacts with SLC6A9. In terms of tissue distribution, widely expressed, with highest levels in kidney, followed by brain (at protein level).

The protein resides in the cytoplasm. The protein localises to the perinuclear region. Its subcellular location is the cell projection. It is found in the growth cone. It localises to the neuron projection. The protein resides in the midbody. The protein localises to the golgi apparatus. Component of the exocyst complex involved in the docking of exocytic vesicles with fusion sites on the plasma membrane. The polypeptide is Exocyst complex component 3 (Exoc3) (Rattus norvegicus (Rat)).